The primary structure comprises 198 residues: Protein GrpE (198 aa).

Belongs to the GrpE family. In terms of assembly, homodimer.

It is found in the cytoplasm. In terms of biological role, participates actively in the response to hyperosmotic and heat shock by preventing the aggregation of stress-denatured proteins, in association with DnaK and GrpE. It is the nucleotide exchange factor for DnaK and may function as a thermosensor. Unfolded proteins bind initially to DnaJ; upon interaction with the DnaJ-bound protein, DnaK hydrolyzes its bound ATP, resulting in the formation of a stable complex. GrpE releases ADP from DnaK; ATP binding to DnaK triggers the release of the substrate protein, thus completing the reaction cycle. Several rounds of ATP-dependent interactions between DnaJ, DnaK and GrpE are required for fully efficient folding. This is Protein GrpE from Actinobacillus pleuropneumoniae serotype 3 (strain JL03).